Reading from the N-terminus, the 274-residue chain is Protein RecA (274 aa).

Residue 43–50 (GPESSGKT) coordinates ATP.

This sequence belongs to the RecA family.

It localises to the cytoplasm. Functionally, can catalyze the hydrolysis of ATP in the presence of single-stranded DNA, the ATP-dependent uptake of single-stranded DNA by duplex DNA, and the ATP-dependent hybridization of homologous single-stranded DNAs. It interacts with LexA causing its activation and leading to its autocatalytic cleavage. This is Protein RecA from Neisseria polysaccharea.